The following is a 358-amino-acid chain: Gap junction alpha-5 protein (358 aa).

Topologically, residues 1–19 (MGDWSFLGEFLEEVHKHST) are cytoplasmic. A helical transmembrane segment spans residues 20–40 (VIGKVWLTVLFIFRMLVLGTA). Topologically, residues 41 to 76 (AESSWGDEQADFQCDTMQPGCGNVCYDQAFPISHIR) are extracellular. Residues 77–97 (YWVLQIIFVSTPSLVYMGHAM) traverse the membrane as a helical segment. Topologically, residues 98–164 (HTVRMQEKRK…CSILIRTTME (67 aa)) are cytoplasmic. A helical membrane pass occupies residues 165 to 185 (VAFIVGQYLLYGIFLDTLHVC). Topologically, residues 186 to 205 (RRSPCPHPVNCYVSRPTEKN) are extracellular. The chain crosses the membrane as a helical span at residues 206–226 (VFIVFMLAVAALSLFLSLAEL). Topologically, residues 227-358 (YHLGWKKLRQ…SKARSDDLSV (132 aa)) are cytoplasmic. Positions 318 to 358 (AQKPEVPNGASPGHRLPHGYQSDKRRLSKASSKARSDDLSV) are disordered. A phosphoserine mark is found at S353 and S357.

The protein belongs to the connexin family. Alpha-type (group II) subfamily. A connexon is composed of a hexamer of connexins.

It localises to the cell membrane. It is found in the cell junction. Its subcellular location is the gap junction. One gap junction consists of a cluster of closely packed pairs of transmembrane channels, the connexons, through which materials of low MW diffuse from one cell to a neighboring cell. The chain is Gap junction alpha-5 protein (GJA5) from Canis lupus familiaris (Dog).